The sequence spans 507 residues: Heat shock 70 kDa protein 14-B (507 aa).

This sequence belongs to the heat shock protein 70 family. As to quaternary structure, component of ribosome-associated complex (RAC).

The protein localises to the cytoplasm. It localises to the cytosol. Functionally, component of the ribosome-associated complex (RAC), a complex involved in folding or maintaining nascent polypeptides in a folding-competent state. The chain is Heat shock 70 kDa protein 14-B (hspa14-b) from Xenopus laevis (African clawed frog).